Reading from the N-terminus, the 104-residue chain is Protein RnfH (104 aa).

Belongs to the UPF0125 (RnfH) family.

The chain is Protein RnfH from Pseudomonas syringae pv. syringae (strain B728a).